The following is a 546-amino-acid chain: Chaperonin GroEL (546 aa).

Residues 30-33 (TLGP), Lys51, 87-91 (DGTTT), Gly415, and Asp495 contribute to the ATP site.

The protein belongs to the chaperonin (HSP60) family. In terms of assembly, forms a cylinder of 14 subunits composed of two heptameric rings stacked back-to-back. Interacts with the co-chaperonin GroES.

It is found in the cytoplasm. The catalysed reaction is ATP + H2O + a folded polypeptide = ADP + phosphate + an unfolded polypeptide.. Together with its co-chaperonin GroES, plays an essential role in assisting protein folding. The GroEL-GroES system forms a nano-cage that allows encapsulation of the non-native substrate proteins and provides a physical environment optimized to promote and accelerate protein folding. The chain is Chaperonin GroEL from Brucella anthropi (strain ATCC 49188 / DSM 6882 / CCUG 24695 / JCM 21032 / LMG 3331 / NBRC 15819 / NCTC 12168 / Alc 37) (Ochrobactrum anthropi).